The sequence spans 283 residues: Phosphate import ATP-binding protein PstB 2 (283 aa).

Positions 36 to 278 (LQVKQFNFYY…PKKKQTEDYI (243 aa)) constitute an ABC transporter domain. Residue 69-76 (GPSGCGKS) participates in ATP binding.

It belongs to the ABC transporter superfamily. Phosphate importer (TC 3.A.1.7) family. In terms of assembly, the complex is composed of two ATP-binding proteins (PstB), two transmembrane proteins (PstC and PstA) and a solute-binding protein (PstS).

It is found in the cell inner membrane. The enzyme catalyses phosphate(out) + ATP + H2O = ADP + 2 phosphate(in) + H(+). Part of the ABC transporter complex PstSACB involved in phosphate import. Responsible for energy coupling to the transport system. This is Phosphate import ATP-binding protein PstB 2 from Nitrosococcus oceani (strain ATCC 19707 / BCRC 17464 / JCM 30415 / NCIMB 11848 / C-107).